The sequence spans 116 residues: Large ribosomal subunit protein bL20 (116 aa).

This sequence belongs to the bacterial ribosomal protein bL20 family.

Functionally, binds directly to 23S ribosomal RNA and is necessary for the in vitro assembly process of the 50S ribosomal subunit. It is not involved in the protein synthesizing functions of that subunit. The protein is Large ribosomal subunit protein bL20 of Desulforapulum autotrophicum (strain ATCC 43914 / DSM 3382 / VKM B-1955 / HRM2) (Desulfobacterium autotrophicum).